The sequence spans 69 residues: Small integral membrane protein 20 (69 aa).

Residues 1–8 (MAAARNLR) lie on the Mitochondrial matrix side of the membrane. A helical transmembrane segment spans residues 9–29 (TALIFGGFISMVGAAFYPIYF). The Mitochondrial intermembrane segment spans residues 30-69 (RPLMRLEEYQKEQAVNRAGIVQEDVQPPGLKVWSDPFGRK). Phenylalanine amide is present on phenylalanine 66.

As to quaternary structure, component of the MITRAC (mitochondrial translation regulation assembly intermediate of cytochrome c oxidase complex) complex, the core components of this complex being COA3/MITRAC12 and COX14. Interacts with COA3/MITRAC12 and COX4I1. Directly interacts with newly synthesized MT-CO1/COX1. Highly expressed in the hypothalamus, the spinal cord, and sensory ganglia (at protein level). Also expressed on in the epidermis and dermis layers of the skin (at protein level). Expressed in preadipocytes and adipocytes (at protein level). Expressed in the ovary, specifically in granulosa cells of follicles that have passed the primary stage and in oocytes (at protein level).

The protein resides in the mitochondrion inner membrane. The protein localises to the secreted. Its function is as follows. Component of the MITRAC (mitochondrial translation regulation assembly intermediate of cytochrome c oxidase complex) complex, that regulates cytochrome c oxidase assembly. Promotes the progression of complex assembly after the association of MT-CO1/COX1 with COX4I1 and COX6C. Chaperone-like assembly factor required to stabilize newly synthesized MT-CO1/COX1 and to prevent its premature turnover. Functionally, peptide involved in a broad spectrum of regulatory functions. Is a ligand for GPR173. As part of the reproductive cycle, it regulates gonadotropin-releasing hormone (GnRH) signaling in the hypothalamus and pituitary gland which augments the release of luteinizing hormone. More specifically, it regulates the expression of transcription factors CEBPB and POU2F1/OCT1 through the cAMP-PKA signaling pathway, which subsequently regulate the expression of GNRHR and KISS1. Plays a protective role in memory retention through activation of GNRHR. Regulates the secretion of AVP by hypothalamic neurons. Plays a role in the transduction of the itch sensation. Induces anxiolytic effects, reducing behavior associated with anxiety. Regulates food intake as well as satiation and satiety by increasing Nucb2 expression in neurons. In the ovary, it regulates follicular growth by stimulating granulosa cell proliferation by increasing the expression of GPR173, CREB1, CYP19A1, KITLG, FSHR, and LHCGR. It also increases the production of estradiol (E2). In the heart, it regulates contractility and relaxation by activating the AKT1-NOS3 and MAPK1-MAPK3 signaling pathways. It also plays a cardioprotective role during ischemia, where it activates the SAFE and RISK pathways. Stimulates the proliferation and differentiation of preadipocytes. In pancreatic islet cells, it induces proliferation of islet cells as well as the production of INS through activation of the MAPK1-MAPK3 signaling pathways. The polypeptide is Small integral membrane protein 20 (Mus musculus (Mouse)).